The chain runs to 182 residues: Putative pre-16S rRNA nuclease (182 aa).

The protein belongs to the YqgF nuclease family.

The protein localises to the cytoplasm. Could be a nuclease involved in processing of the 5'-end of pre-16S rRNA. This chain is Putative pre-16S rRNA nuclease, found in Corynebacterium glutamicum (strain ATCC 13032 / DSM 20300 / JCM 1318 / BCRC 11384 / CCUG 27702 / LMG 3730 / NBRC 12168 / NCIMB 10025 / NRRL B-2784 / 534).